Here is a 269-residue protein sequence, read N- to C-terminus: Tryptophan synthase alpha chain (269 aa).

Active-site proton acceptor residues include E49 and D60.

Belongs to the TrpA family. In terms of assembly, tetramer of two alpha and two beta chains.

The catalysed reaction is (1S,2R)-1-C-(indol-3-yl)glycerol 3-phosphate + L-serine = D-glyceraldehyde 3-phosphate + L-tryptophan + H2O. The protein operates within amino-acid biosynthesis; L-tryptophan biosynthesis; L-tryptophan from chorismate: step 5/5. In terms of biological role, the alpha subunit is responsible for the aldol cleavage of indoleglycerol phosphate to indole and glyceraldehyde 3-phosphate. The chain is Tryptophan synthase alpha chain from Pseudomonas putida (strain GB-1).